The chain runs to 289 residues: Diaminopimelate epimerase (289 aa).

Residues Asn-11 and Asn-78 each coordinate substrate. The active-site Proton donor is Cys-87. Residues 88–89 (GN), Asn-163, Asn-199, and 217–218 (ER) each bind substrate. Catalysis depends on Cys-226, which acts as the Proton acceptor. 227–228 (GT) contacts substrate.

It belongs to the diaminopimelate epimerase family. In terms of assembly, homodimer.

The protein localises to the cytoplasm. The catalysed reaction is (2S,6S)-2,6-diaminopimelate = meso-2,6-diaminopimelate. The protein operates within amino-acid biosynthesis; L-lysine biosynthesis via DAP pathway; DL-2,6-diaminopimelate from LL-2,6-diaminopimelate: step 1/1. In terms of biological role, catalyzes the stereoinversion of LL-2,6-diaminopimelate (L,L-DAP) to meso-diaminopimelate (meso-DAP), a precursor of L-lysine and an essential component of the bacterial peptidoglycan. The sequence is that of Diaminopimelate epimerase from Rhodococcus opacus (strain B4).